The following is a 167-amino-acid chain: Thioredoxin Y2, chloroplastic (167 aa).

The N-terminal 58 residues, 1 to 58 (MAISLATAYISPCFTPESSNSASPSRTLSSVRLPSQIRRFGSVQSPSSSTRFAPLTVR), are a transit peptide targeting the chloroplast. The Thioredoxin domain occupies 59–164 (AAKKQTFNSF…LVERIENSLQ (106 aa)). Residues C88 and C91 each act as nucleophile in the active site. A disulfide bond links C88 and C91.

This sequence belongs to the thioredoxin family. Plant Y-type subfamily. As to expression, expressed in leaves.

It is found in the plastid. The protein resides in the chloroplast stroma. Functionally, thiol-disulfide oxidoreductase that poorly activates chloroplastic malate dehydrogenase (NADP-MDH) and fructose-1,6-bisphosphatase. Provides reducing equivalents for peroxiredoxin Q. The sequence is that of Thioredoxin Y2, chloroplastic from Arabidopsis thaliana (Mouse-ear cress).